A 163-amino-acid chain; its full sequence is Calmodulin (163 aa).

Alanine 2 carries the post-translational modification N-acetylalanine. EF-hand domains are found at residues 11–46 (EQIAEFKEAFALFDKDGDGTITTKELGTVMRSLGQN), 47–82 (PTEAELQDMISEVDADGNGTIDFPEFLMLMARKMKE), 84–119 (DHEDELREAFKVFDKDGNGFISAAELRHVMTNLGEK), and 120–155 (LSEEEVDEMIREADVDGDGQVNYEEFVRMMTSGATD). Aspartate 24, aspartate 26, aspartate 28, threonine 30, glutamate 35, aspartate 60, aspartate 62, asparagine 64, threonine 66, glutamate 71, aspartate 97, aspartate 99, asparagine 101, glutamate 108, aspartate 133, aspartate 135, aspartate 137, glutamine 139, and glutamate 144 together coordinate Ca(2+).

The protein belongs to the calmodulin family. As to quaternary structure, associates with the spoke-associated complex containing CFAP61, CFAP91 and CFAP251; the association is calcium sensitive. In terms of processing, trimethylation of Lys-119 observed in other calmodulins is absent here.

It localises to the cytoplasm. Its subcellular location is the cytoskeleton. The protein localises to the flagellum axoneme. Calmodulin mediates the control of a large number of enzymes, ion channels and other proteins by Ca(2+). Among the enzymes to be stimulated by the calmodulin-Ca(2+) complex are a number of protein kinases and phosphatases. In Chlamydomonas reinhardtii (Chlamydomonas smithii), this protein is Calmodulin.